Here is a 334-residue protein sequence, read N- to C-terminus: Transcription initiation factor IIB (334 aa).

A TFIIB-type zinc finger spans residues 34 to 65 (TETVCPECGGRQLVHDYERAELVCQSCGLVID). Cys38, Cys41, Cys57, and Cys60 together coordinate Zn(2+). 2 tandem repeats follow at residues 151-234 (SELD…SREL) and 245-326 (DYVP…ELAE).

The protein belongs to the TFIIB family.

Stabilizes TBP binding to an archaeal box-A promoter. Also responsible for recruiting RNA polymerase II to the pre-initiation complex (DNA-TBP-TFIIB). The chain is Transcription initiation factor IIB from Methanoregula boonei (strain DSM 21154 / JCM 14090 / 6A8).